The following is a 385-amino-acid chain: Polyketide synthase 3 (385 aa).

Cysteine 157 is an active-site residue.

This sequence belongs to the thiolase-like superfamily. Chalcone/stilbene synthases family. Expressed in male and female flowers, and seedlings.

The protein resides in the cytoplasm. In terms of biological role, polyketide synthase responsible for the biosynthesis of secondary metabolites. This chain is Polyketide synthase 3 (PKSF3), found in Cannabis sativa (Hemp).